We begin with the raw amino-acid sequence, 166 residues long: Endoribonuclease YbeY (166 aa).

Histidine 129, histidine 133, and histidine 139 together coordinate Zn(2+).

It belongs to the endoribonuclease YbeY family. It depends on Zn(2+) as a cofactor.

It is found in the cytoplasm. Its function is as follows. Single strand-specific metallo-endoribonuclease involved in late-stage 70S ribosome quality control and in maturation of the 3' terminus of the 16S rRNA. The sequence is that of Endoribonuclease YbeY from Heliobacterium modesticaldum (strain ATCC 51547 / Ice1).